A 186-amino-acid chain; its full sequence is CRS2-like protein, chloroplastic (186 aa).

A chloroplast-targeting transit peptide spans methionine 1–serine 49. Tyrosine 73 contributes to the tRNA binding site. The Proton acceptor role is filled by histidine 78. The tRNA site is built by tyrosine 123, asparagine 125, and asparagine 171.

This sequence belongs to the PTH family.

Its subcellular location is the plastid. It is found in the chloroplast. This is CRS2-like protein, chloroplastic from Oryza sativa subsp. japonica (Rice).